The following is a 341-amino-acid chain: MVLQAIGKHALGVVLLLFVVFLWLISSFLTSSLLDDDNFFSPFLITYINTGTFVFYLIPWYFSEKKTRKHRLMSELSMYESVHDSSFNLGTRPNSPLGFRQTAYLSLGFCIIWFAANYFSNSSLGFTNVASFTIISSMSGFFTLGLGTIVNVERFTLSKLLALMASVGGVIIVVTQDAKQADLNDSPPSRPALGNAYALLAALLYGCYSVMVKFHITEESCVSTRLFFGLVGLFDLILLWPFLIILHLYGVERFSLPSTTAGLIVLIINASITFVSDYLWVIAMLMTSPLLVTVGMSLSIPLALFFDILLKGHYLNFSLILGSLLVFAGFIVVNYNQQNII.

A run of 10 helical transmembrane segments spans residues 10 to 30, 42 to 62, 107 to 127, 129 to 149, 155 to 175, 192 to 212, 226 to 246, 263 to 283, 290 to 310, and 313 to 333; these read ALGVVLLLFVVFLWLISSFLT, PFLITYINTGTFVFYLIPWYF, LGFCIIWFAANYFSNSSLGFT, VASFTIISSMSGFFTLGLGTI, FTLSKLLALMASVGGVIIVVT, ALGNAYALLAALLYGCYSVMV, LFFGLVGLFDLILLWPFLIIL, LIVLIINASITFVSDYLWVIA, LLVTVGMSLSIPLALFFDILL, and HYLNFSLILGSLLVFAGFIVV.

The protein belongs to the TPT transporter family.

It is found in the vacuole membrane. The protein resides in the golgi apparatus membrane. This is an uncharacterized protein from Schizosaccharomyces pombe (strain 972 / ATCC 24843) (Fission yeast).